The chain runs to 652 residues: DNA ligase (652 aa).

Residues 29–33 (DSDYD), 78–79 (SL), and E107 contribute to the NAD(+) site. The active-site N6-AMP-lysine intermediate is K109. The NAD(+) site is built by R130, E164, K278, and K302. Residues C395, C398, C413, and C418 each coordinate Zn(2+). The 76-residue stretch at 577 to 652 (NSDAALFGLT…IEDEDWLRQL (76 aa)) folds into the BRCT domain.

Belongs to the NAD-dependent DNA ligase family. LigA subfamily. The cofactor is Mg(2+). Mn(2+) is required as a cofactor.

It catalyses the reaction NAD(+) + (deoxyribonucleotide)n-3'-hydroxyl + 5'-phospho-(deoxyribonucleotide)m = (deoxyribonucleotide)n+m + AMP + beta-nicotinamide D-nucleotide.. DNA ligase that catalyzes the formation of phosphodiester linkages between 5'-phosphoryl and 3'-hydroxyl groups in double-stranded DNA using NAD as a coenzyme and as the energy source for the reaction. It is essential for DNA replication and repair of damaged DNA. In Streptococcus pyogenes serotype M12 (strain MGAS2096), this protein is DNA ligase.